A 171-amino-acid chain; its full sequence is 2-C-methyl-D-erythritol 2,4-cyclodiphosphate synthase (171 aa).

The a divalent metal cation site is built by D8 and H10. 4-CDP-2-C-methyl-D-erythritol 2-phosphate is bound by residues 8–10 (DVH) and 34–35 (HS). H42 is a binding site for a divalent metal cation. Residues 56 to 58 (DIG), 61 to 65 (FPDTD), 132 to 135 (TTTE), F139, and R142 contribute to the 4-CDP-2-C-methyl-D-erythritol 2-phosphate site.

This sequence belongs to the IspF family. In terms of assembly, homotrimer. The cofactor is a divalent metal cation.

The enzyme catalyses 4-CDP-2-C-methyl-D-erythritol 2-phosphate = 2-C-methyl-D-erythritol 2,4-cyclic diphosphate + CMP. The protein operates within isoprenoid biosynthesis; isopentenyl diphosphate biosynthesis via DXP pathway; isopentenyl diphosphate from 1-deoxy-D-xylulose 5-phosphate: step 4/6. In terms of biological role, involved in the biosynthesis of isopentenyl diphosphate (IPP) and dimethylallyl diphosphate (DMAPP), two major building blocks of isoprenoid compounds. Catalyzes the conversion of 4-diphosphocytidyl-2-C-methyl-D-erythritol 2-phosphate (CDP-ME2P) to 2-C-methyl-D-erythritol 2,4-cyclodiphosphate (ME-CPP) with a corresponding release of cytidine 5-monophosphate (CMP). This chain is 2-C-methyl-D-erythritol 2,4-cyclodiphosphate synthase, found in Geotalea daltonii (strain DSM 22248 / JCM 15807 / FRC-32) (Geobacter daltonii).